The sequence spans 207 residues: Porin MspD (207 aa).

Residues 1-24 form the signal peptide; that stretch reads MRYLVMMFALLVSVTLVSPRPANA.

The protein belongs to the mycobacterial porin (TC 1.B.24) family. Octamers. Probably forms a goblet with the wide end on the exterior of the outer membrane and a central channel. It is not known if mixed oligomers of MspD with other Msp subunits form in vivo.

It localises to the cell outer membrane. The protein localises to the secreted. The protein resides in the cell wall. A backup porin induced when MspA, the major porin, is deleted. It probably forms a water-filled channel which favors the permeation of cations. There are about 2400 porins in wild-type, 800 in an mspA deletion and 150 in a double mspA-mspC deletion. In Mycolicibacterium smegmatis (strain ATCC 700084 / mc(2)155) (Mycobacterium smegmatis), this protein is Porin MspD (mspD).